The sequence spans 20 residues: Protein PR-L2 (20 aa).

The disordered stretch occupies residues 1–20; it reads SVFAFENEQSSTIAPARLYK.

It belongs to the BetVI family.

This Lupinus luteus (European yellow lupine) protein is Protein PR-L2.